Here is a 251-residue protein sequence, read N- to C-terminus: MRKPIIAGNWKMNKTAAKAGQFAEDVKNNVPSSDAVESVVAAPALFLQELVRLTEGTDLRVSAQNCYFEDEGAFTGEISPFALADLGVSYVIIGHSERREYFHETDEDINKKAHAIFKHGMTPIICCGETLDQREAGQTDTWVRGQIRAALAGLTEEQVIKSVIAYEPIWAIGTGKSSTSADANETCAVIRAEVADAVSQKAADAVRIQYGGSVKPENIADYLAESDIDGALVGGASLEPASFLALLEAVK.

Substrate is bound at residue Asn-9–Lys-11. Residue His-95 is the Electrophile of the active site. Catalysis depends on Glu-167, which acts as the Proton acceptor. Substrate-binding positions include Gly-173, Ser-213, and Gly-234–Gly-235.

This sequence belongs to the triosephosphate isomerase family. As to quaternary structure, homodimer.

Its subcellular location is the cytoplasm. The enzyme catalyses D-glyceraldehyde 3-phosphate = dihydroxyacetone phosphate. Its pathway is carbohydrate biosynthesis; gluconeogenesis. The protein operates within carbohydrate degradation; glycolysis; D-glyceraldehyde 3-phosphate from glycerone phosphate: step 1/1. Functionally, involved in the gluconeogenesis. Catalyzes stereospecifically the conversion of dihydroxyacetone phosphate (DHAP) to D-glyceraldehyde-3-phosphate (G3P). This is Triosephosphate isomerase 1 from Listeria monocytogenes serovar 1/2a (strain ATCC BAA-679 / EGD-e).